The primary structure comprises 425 residues: D-tagatose 6-phosphate 4-epimerase (425 aa).

The protein belongs to the GatZ/KbaZ family.

The enzyme catalyses keto-D-tagatose 6-phosphate = keto-D-fructose 6-phosphate. Its pathway is carbohydrate metabolism. Involved in galactitol and D-altritol catabolism. Catalyzes the epimerization of D-tagatose 6-phosphate to D-fructose 6-phosphate. This chain is D-tagatose 6-phosphate 4-epimerase, found in Agrobacterium fabrum (strain C58 / ATCC 33970) (Agrobacterium tumefaciens (strain C58)).